A 379-amino-acid polypeptide reads, in one-letter code: Queuine tRNA-ribosyltransferase (379 aa).

D94 (proton acceptor) is an active-site residue. Substrate contacts are provided by residues 94–98 (DSGGF), D148, Q191, and G218. Residues 249–255 (GVGSPDA) form an RNA binding region. The active-site Nucleophile is D268. Residues 273 to 277 (TRIAR) are RNA binding; important for wobble base 34 recognition. The Zn(2+) site is built by C306, C308, C311, and H337.

It belongs to the queuine tRNA-ribosyltransferase family. In terms of assembly, homodimer. Within each dimer, one monomer is responsible for RNA recognition and catalysis, while the other monomer binds to the replacement base PreQ1. Zn(2+) serves as cofactor.

The catalysed reaction is 7-aminomethyl-7-carbaguanine + guanosine(34) in tRNA = 7-aminomethyl-7-carbaguanosine(34) in tRNA + guanine. It participates in tRNA modification; tRNA-queuosine biosynthesis. Functionally, catalyzes the base-exchange of a guanine (G) residue with the queuine precursor 7-aminomethyl-7-deazaguanine (PreQ1) at position 34 (anticodon wobble position) in tRNAs with GU(N) anticodons (tRNA-Asp, -Asn, -His and -Tyr). Catalysis occurs through a double-displacement mechanism. The nucleophile active site attacks the C1' of nucleotide 34 to detach the guanine base from the RNA, forming a covalent enzyme-RNA intermediate. The proton acceptor active site deprotonates the incoming PreQ1, allowing a nucleophilic attack on the C1' of the ribose to form the product. After dissociation, two additional enzymatic reactions on the tRNA convert PreQ1 to queuine (Q), resulting in the hypermodified nucleoside queuosine (7-(((4,5-cis-dihydroxy-2-cyclopenten-1-yl)amino)methyl)-7-deazaguanosine). The polypeptide is Queuine tRNA-ribosyltransferase (Staphylococcus aureus (strain bovine RF122 / ET3-1)).